The sequence spans 131 residues: Global transcriptional regulator Spx 1 (131 aa).

A disulfide bridge connects residues Cys-10 and Cys-13.

The protein belongs to the ArsC family. Spx subfamily. As to quaternary structure, interacts with the C-terminal domain of the alpha subunit of the RNAP.

The protein resides in the cytoplasm. Its function is as follows. Global transcriptional regulator that plays a key role in stress response and exerts either positive or negative regulation of genes. Acts by interacting with the C-terminal domain of the alpha subunit of the RNA polymerase (RNAP). This interaction can enhance binding of RNAP to the promoter region of target genes and stimulate their transcription, or block interaction of RNAP with activator. This is Global transcriptional regulator Spx 1 from Oceanobacillus iheyensis (strain DSM 14371 / CIP 107618 / JCM 11309 / KCTC 3954 / HTE831).